Here is a 4763-residue protein sequence, read N- to C-terminus: MAGTANPADEGLTGPTETTNHINSARSDVALGSSLSGIVPMTKIPALNTIDQFVAEGSPDDLIGQSPWRRIGQGDVSGELATGLIEGYARFVSALTGVEDVAFAVLCQASTRPSQALICASVTLTDQGREVPSAWQCAVRELDFSYYNRSEVQFALDLGLTGGPENRKAGLSTLAENDCLSLYVRGSTDGLCISFTYPRRLIPEAAVSQLLKTITFHITQTTGCLQSTGAWPDDPTPDLSILNFPPLMIPPSRDHDSATMPRHSKSFLLHSAFEGWAQKSPTSIALDFVHSLPSASTVAEHSTLTYAALNAAATYLAIHIRSLLSDNTRNAGSRIIPVYMSTSPELYISYLGILKAGYAFCPIPTDAPPQRVREIFQDIDSSVILGDGEEPSSVSWFLSAAGEATSKPTWVNVAEVSRWKHLSREDTEIATEDRLFEPPDIDHNEIAYLLFTSGSTGKPKGVQVSHLAVTCSIESHATAIPLPGTSAGDFRWFQFASPTFDPSLMEIFVTLSSGGTLCSASRSLTLTDLEGTINEARATVMMATPSLAALLRPAQLTTLQYLWTMGEKLNRTVIENFTQKAHSNDLNGDSVPALRLLVNAYGPTEAAINCTFFAPVEYHTRGSIIGEPLPTCSIFVLDPASHTPKPIPAGLAGELAIGGPQVSQGYLNRPEETANSFVHSPEYGYLYRTGDLARIVWDEKGAQVIEFLGRITSDQVKISGRRVELGEIESVLATLTGVREVVAVVPKRDASVQGSEQIVACIVADSLSEDAAPEFVRLADECAHRHLAAYMCPSSYVFFDSIPRTSSGKVDRNSISSMLQQGKDSGMKFYMPSNDVPEARGMARAEWDPLEDEKALELRTLVLDLVAQTTGQDISVIKPNTSLYTLGLDSLGSMQFLQKLRDKSLHNLSVGDVLQSNTVNGLLTLILNGKTNLRGLTNGQLADDSRMSLAEHLQAFNDTNLSRCAKRLSISPERIQTVLPTTETQSGMLTSFLRTSTDSSFATRSYIYHSVISLEPHVDIERLKKAWESVIASYDSFRTRFCWIDDDMAPFAQCILKEDAASAPMWAINHTFGDSMHEDSLTRALREAENTISLDSPWKLSLLESSGDKVIILSMFHGIFDGGSLQLLLENVSSVYDGQLPAPRTSLEHVVVNHFQANQTATSNFWKEYLNKYSPIAFPSLTAYRPPAVNATGCVEITPRTTHDILKQQSRTIGSTPLSVLQAAWASLLLAYTGTQDHDVVMGSVISGRFDPDSEICIGPTFTTIPTRLALGQIPKAGGFWTNKSVVNHLASLNAKALSHLQPRLGSLVTADSKLPYDTVLAYQDFSAGSSTSSIWKSIDHPPMANDYAVMIEVWPARDSSLTLRASFALSQMDRDGAKVMLHQLDDIIAFILQNPDGDFENALLYTRPDLKASYNPMPKEADEVSDGDLIHTKFENHANSHPDDMALLFKYDLEDDGNLQNISWTYGELNARADNLAAYLCETYDKLTNKVVPICIEKSPAMYIAILGILKAGGAWCPIDTFSPAQRRHDLIKRTGAGVLLVSSEDGEQPKDAIPIGIDVVDVKKYADPLVSWPSVGRWSSKKLSSPAGLAYLIWTSGTTGAPKGVPITHSAAVSCFRSLKKDIPSDVSGGVVRCLQFSQYTFDVSIQDLFYTWSLGGVLISATREIMLGSFAKLANTTRATHAHLTPAFAAGVPRNSCETLEVITMIGEKLTQHVADDWGTDMRAYNTYGPAEVTIVSTVREFGNDCLNIKSANVGWPMESVSVFVTRNKQIVMKNAVGELALGGPQLSPGYLDQEDVTKAKYVWSEEAGQILYYTGDLVRMLADGSLEFMNRVDDLVKIGGIRIELSEISFALGGCHPLVENIETLYIDRPDRPSKVLVAFLSASNATGADAGDDLLLLNDSALQIALSTREKAHTALPAYMVPSVYLVMKRIPRTQSAKTDRRALQAAYASVDIEDWENRMNPENNATGHPTDDLVASDAMEKIVHMIASLINISPSIVAKASRLRSLGIDSIHAIRLASRLKEAGYRLSFIEVINCVTVQDLARLCTSSSEVDALPAAEFDINLFNDQWHDIVASKVDGEFFTVRATPIQESLLSETMGTYNLYWSNHLFSLDKSVDVKRLKQAWLALCQKNEALRTGFIPVAEVNNSSRKDDLDFSILQVLHDHPTLDWEYVMCEDHEWDRLLHSRIEDVMKAHQKTYFKQPPWAVTVLDNGVERFMVLTMHHSIHDGPSLDLIERDLRSAYIDKPPSRYQLRSALSKILPTDEMAAETRRFWSSELQKYSELDAPAWPDLTGKRKPETAVQEHNLISEQMRMTEPLEKLQSISAELGVSSIASLIRAAWGFVSLSYLGVPAAVFAETVSDRILHADLDNGIGPLISVVPVPFDPKGTAREVLAEQQRISTQSRKYRHIHAREVRRMLNRPRGEPLYPAVFAFHPAGAEADGTTNPGLWHELEDRIGLHVEHPMAFNVLQNADSSLVLEVFSDASLMSHEHLSIFVRQVDSLVSAMLANPDKELRELINHLPPSLRSKSSQHVSEAVRNSVTLSPTHWLELNAREHPEWTAVEVASSISASGIEKQSMSYGTLNAAANCVAAFIASVGYKNRMIAVCAGRNLPSYPVIVGVFKSGNTYLPIDNNLPNDRKTFLIEDGNCPLVFTETAFAATFSDVPETCRVLCIDHPSFVDSLAGMPTDNRAYASDPQDNAYLLYTSGSTGKPKGVMVSRANLSAFIESFSEFVCRVAPSTLELGGRGRYLAQASRAFDVHLLEMFFAWRHGMASVTAERTMLLDDLQLTITKWGITHASMVPSLVDQTNLRPELCPELKYLSVGGEKISKRVLDTWAGLPHVALANAYGPTEVTIGCTFALVGKETTIRNIGPPLSACTCHVLIPGTMDYALRGQTGELCFTGDIVGNGYLNRPDATGFVQGPDGEKMYRTGDIGRLMSDDSVEYVGRGDDQTKIRGQRLELGEVSEVIRSSSPVQIGVVTTVTKHPGLARPQLISFIARSGDKSRQRSGDATIIHSDLATLGKELRDACQRKLPAYMVPEIILPITFIPLAPMSGKANIKELHSMFSSLPLASILQGNNPGTSDTAAFTDRPLSSDEEAVVSEICAVIKVERENINPLTNIFEIGLDSLSAISLSVKLRRIGYDATVALVMGNPVVEQLAQLPRKSTEAVADPHSSDLTKRLAELETEYHKGYTRPANSGQVAVRPCLPLQEGLVARSINSEEDQLYVNHIALSFGPGLDSGRLRFAWQDTADNSEILRTCFAPLEKEIVQVVLTPGGAISWTEDEYDSLEDCIKEQRARQQEISRGIIKNMTDVPPVRFHLATLSSKRPLVLFIAIHHALYDGESFSMLLEDVAARYVGEPVTRRGSPAAFIDHVYGQNLEKAQQHWVNALSDCQPTIFRVDTGVVEETTFINRKLHAGLAKLERHSADLHTTVPSLMQALFALLLADRVNSSDVTYGLVLSGRAVAVPDAESVLLPCITTIPARLNTSGLKTVSDVVRSVHQSTARSLEYQHTSLRHIQRWLKSEKPLFDCLFSYIRSTPAPKNTLWGQLESTMPSEYPLAVEIEANSEKDEMYVHCGFSPSFGSADRGQEFLEKLDALLSAFLFEDDIALDSFSLANSGNPGSRATEVKWDATTWSATETKIRDLTATFCGLDVVNVSKGTSFISLGIDSVTAIQFARKLRELQFEIVPSDIMRFPCVGALAEHVDERSSEGRQSARVGDKKPRVSLAAHRDNVPLLDDGDSVAAIFESTPLQAGMITRTLGSDTQVYVHPHIVRLTEGVDIDRLSKAISEVVAKNDILRTSFHPIAENGVTWVGAVHTNPPLQWKEITLPSNADVIAELTSLYSFREVADFETPPVRFVLVHRKNEKLFVVIMHHALYDGVSLPLLFEELAATYHGQTTVGRPQFSEIAHYIVEGQNDSCDFWTKKLAGYEPVEIPALSSSEATERMLLSERKIGLDVEKVVESCKSMEVTVQSVALLAYAKVLACLGGKRDVVFGQVLAGRSLPVPGADQTIGPLFNTVAQRVLFEPKFLSNREMAQRVQQLTSESQAFQHAPLKDVQRALRQEHGMNAASLFDTLFVFQKSADLTTDTPHEQQIWTPFETEGYAAQAEHKLNVEIDHGREAIIVSGSGDGRYICQQALDEFMADFCTAFQDIIEHPSRCATAAPERLGGLPLRLSNAEEPERGHSESDAPAHESIIRDVLAEVSGVSVDSITPSTSIYNIGLDSLSAIRIASICRSRGLKAGVADVLQGNTLRGISARIISPVEAPIQAREPLIKDHEAIEKAVLQRLGLNKDEVETILPCLSGQLYHLVSWLKSGRTLFEPAWSYYSIERIDSGKLEEAWNQLRQRHHILRTCFVATSPSMAVQAVLKDAPQNAEIFKVIESPACIEEAAKAQAREEGLNPSSLFVPPVRLRLLKASDKDGIQIFINHAAYDAWTMPMFVSELAHLYREQPVESTPDFPSFVEYATRSLREVDEQTYWSSQVGSSLPTLIKPTNQGLPKQFFVGVWEKVQNLSQLERACRSACLSLQSVVLLAVSRSLARTTGVQSPTIGLYQTGRSASFSNIENLSGPCLNVTPFTFPSPGAKAESNALDEVQAIQNSLAERVLYEQSCLRDILTNWASTKGKGPLFNTWVNLLWMHQPSTRGDSKSHTDLDLFQPLRIGVPTDFIPATPLPDPSGETTSISALDTSYLPDENLYIDIGPDYSTDTIGFGVRVEGGLLTEKEVRGMVDDVSGEIEGIMAAIQQGKSR.

The interval 1–24 is disordered; sequence MAGTANPADEGLTGPTETTNHINS. Polar residues predominate over residues 15-24; that stretch reads PTETTNHINS. The tract at residues 296-815 is adenylation 1; that stretch reads STVAEHSTLT…SSGKVDRNSI (520 aa). The 78-residue stretch at 853–930 folds into the Carrier 1 domain; sequence EKALELRTLV…GLLTLILNGK (78 aa). An O-(pantetheine 4'-phosphoryl)serine modification is found at serine 890. Positions 1003 to 1396 are condensation 1; the sequence is TRSYIYHSVI…DIIAFILQNP (394 aa). Residues 1398–1951 are adenylation 2; the sequence is GDFENALLYT…AKTDRRALQA (554 aa). Residues 1979-2055 enclose the Carrier 2 domain; the sequence is LVASDAMEKI…DLARLCTSSS (77 aa). Serine 2016 bears the O-(pantetheine 4'-phosphoryl)serine mark. A condensation 2 region spans residues 2092-2423; that stretch reads TPIQESLLSE…HIHAREVRRM (332 aa). Positions 2556-3070 are adenylation 3; it reads ELNAREHPEW…MSGKANIKEL (515 aa). Residues 3099-3175 form the Carrier 3 domain; the sequence is RPLSSDEEAV…QLAQLPRKST (77 aa). The residue at position 3136 (serine 3136) is an O-(pantetheine 4'-phosphoryl)serine. The tract at residues 3217–3626 is condensation 3; that stretch reads PLQEGLVARS…DDIALDSFSL (410 aa). The Carrier 4 domain maps to 3647-3720; the sequence is SATETKIRDL…ALAEHVDERS (74 aa). Position 3681 is an O-(pantetheine 4'-phosphoryl)serine (serine 3681). The interval 3761-4093 is condensation 4; that stretch reads TPLQAGMITR…SLFDTLFVFQ (333 aa). Residues 4204–4277 form the Carrier 5 domain; it reads PAHESIIRDV…GISARIISPV (74 aa). Serine 4238 is modified (O-(pantetheine 4'-phosphoryl)serine). The tract at residues 4344-4593 is condensation 5; it reads ERIDSGKLEE…PCLNVTPFTF (250 aa).

It belongs to the NRP synthetase family.

Its pathway is siderophore biosynthesis. Its function is as follows. Nonribosomal peptide synthase; part of the siderophore biosynthetic pathway. Aspergillus fumigatus produces four types of siderophores, low-molecular-mass iron chelators, including excreted fusarinine C (FsC) and triacetylfusarinine C (TAFC) for iron uptake; and intacellular ferricrocin (FC) for hyphal and hydroxyferricrocin (HFC) for conidial iron distribution and storage. TAFC consists of three N(2)-acetyl-N(5)-anhydromevalonyl-N(5)-hydroxyornithine residues cyclically linked by ester bonds; FC is a cyclic hexapeptide with the structure Gly-Ser-Gly-(N(5)-acetyl-N(5)-hydroxyornithine)x3. The biosynthesis of all four siderophores depends on the hydroxylation of ornithine, catalyzed by the monooxygenase sidA. Subsequently, the pathways for biosynthesis of extra- and intracellular siderophores split. For biosynthesis of extracellular siderophores, the transacylase sidF transfers anhydromevalonyl to N(5)-hydroxyornithine. The required anhydromevalonyl-CoA moiety is derived from mevalonate by CoA ligation and dehydration catalyzed by sidI and sidH respectively. The acetylation of N(5)-hydroxyornithine for FC biosynthesis involves the constitutively expressed sidL. FC is hydroxylated to HFC by an as yet uncharacterized enzyme during conidiation. Assembly of fusarinine C (FsC) and FC is catalyzed by two different nonribosomal peptide synthetases (NRPS), sidD and sidC respectively. Subsequently, sidG catalyzes N2-acetylation of FsC for forming TAFC. Both extra- and intracellular siderophores are crucial for growth during iron limitation and virulence. This chain is Nonribosomal peptide synthetase sidC, found in Aspergillus fumigatus (strain ATCC MYA-4609 / CBS 101355 / FGSC A1100 / Af293) (Neosartorya fumigata).